A 361-amino-acid chain; its full sequence is Phospho-N-acetylmuramoyl-pentapeptide-transferase (361 aa).

10 helical membrane passes run 26-46, 73-93, 97-117, 134-154, 168-188, 200-220, 237-257, 264-284, 289-309, and 340-360; these read AILG…VMIR, TMGG…WADL, YVWV…VDDY, YFWQ…TASM, VSLT…IVGS, GLAI…AYLS, TGEL…FLWF, VFMG…VAVI, IVLF…ILQV, and IVRF…SLKI.

The protein belongs to the glycosyltransferase 4 family. MraY subfamily. It depends on Mg(2+) as a cofactor.

It localises to the cell inner membrane. It carries out the reaction UDP-N-acetyl-alpha-D-muramoyl-L-alanyl-gamma-D-glutamyl-meso-2,6-diaminopimeloyl-D-alanyl-D-alanine + di-trans,octa-cis-undecaprenyl phosphate = di-trans,octa-cis-undecaprenyl diphospho-N-acetyl-alpha-D-muramoyl-L-alanyl-D-glutamyl-meso-2,6-diaminopimeloyl-D-alanyl-D-alanine + UMP. It participates in cell wall biogenesis; peptidoglycan biosynthesis. Catalyzes the initial step of the lipid cycle reactions in the biosynthesis of the cell wall peptidoglycan: transfers peptidoglycan precursor phospho-MurNAc-pentapeptide from UDP-MurNAc-pentapeptide onto the lipid carrier undecaprenyl phosphate, yielding undecaprenyl-pyrophosphoryl-MurNAc-pentapeptide, known as lipid I. The sequence is that of Phospho-N-acetylmuramoyl-pentapeptide-transferase from Marinobacter nauticus (strain ATCC 700491 / DSM 11845 / VT8) (Marinobacter aquaeolei).